The chain runs to 199 residues: Recombination protein RecR (199 aa).

The C4-type zinc finger occupies 58–73 (CQRCNNFSEEAVCQRC). The region spanning 81–176 (ATLCVVEMPA…KVSRISRGVP (96 aa)) is the Toprim domain.

The protein belongs to the RecR family.

Functionally, may play a role in DNA repair. It seems to be involved in an RecBC-independent recombinational process of DNA repair. It may act with RecF and RecO. The protein is Recombination protein RecR of Azoarcus sp. (strain BH72).